The chain runs to 542 residues: MESQAADYNPASRNLHGSSGEMKLRRRKSRQYVSAQEKRSPRRGLLGENTYLVLFTIALRILNCFLVQTSFVPDEYWQSLEVAHRMVFSYGYLTWEWTERLRGYTYPLIFASIYKVLHLLGKDSVQFLIWIPRLGQALLSAVADIRLYSLLKQLENQEVAQWVFLCQLCSWFTWYCCTRTLTNTMETSLTALALFYYPLEGSRSVNSVKYSLLVALACVVRPTALIPWVPLLFRHFYQEQRKLHLTLHHFLPVGFITFSLSLIIDRIFFGQWTLVQLNFLKFNVLQNLGTFYGSHPWHWYLSQGFPVVLGTHLPFFIHGCFLAPRRLHILLLTVLWTLLVYSMLGHKEFRFIYPVLPFCMVFCGYSLAHLKTWRKAALSFLLLSNVPLAFYTGLVHQRGTLDVMNHIQKVCPRGPDPASASVFIMMPCHSTPYYSHVHCPLSMRFLQCPPDLTGKTQYLDEADMFYLNPLRWLQQEFHSNASLPTHLVTFNVLEKEINTFLTSGNYERAATFFHTHWPERRTGSHIHVYERRLPGRVNTGGN.

The segment at 1–36 is disordered; it reads MESQAADYNPASRNLHGSSGEMKLRRRKSRQYVSAQ. A run of 8 helical transmembrane segments spans residues 52 to 72, 125 to 145, 213 to 233, 244 to 264, 304 to 324, 327 to 347, 351 to 371, and 376 to 396; these read LVLF…TSFV, VQFL…VADI, LVAL…PLLF, HLTL…SLII, GFPV…FLAP, LHIL…LGHK, FIYP…AHLK, and AALS…GLVH. N480 carries N-linked (GlcNAc...) asparagine glycosylation.

It belongs to the glycosyltransferase 22 family. PIGB subfamily.

The protein resides in the endoplasmic reticulum membrane. It functions in the pathway glycolipid biosynthesis; glycosylphosphatidylinositol-anchor biosynthesis. In terms of biological role, alpha-1,2-mannosyltransferase that catalyzes the transfer of the third mannose, via an alpha-1,2 bond, from a dolichol-phosphate-mannose (Dol-P-Man) to an alpha-D-Man-(1-&gt;6)-2-PEtn-alpha-D-Man-(1-&gt;4)-alpha-D-GlcN-(1-&gt;6)-(1-radyl,2-acyl-sn-glycero-3-phospho)-2-acyl-inositol intermediate to generate an alpha-D-Man-(1-&gt;2)-alpha-D-Man-(1-&gt;6)-2-PEtn-alpha-D-Man-(1-&gt;4)-alpha-D-GlcN-(1-&gt;6)-(1-radyl,2-acyl-sn-glycero-3-phospho)-2-acyl-inositol (also termed H6) and participates in the nineth step of the glycosylphosphatidylinositol-anchor biosynthesis. May also add the third mannose to an alpha-D-Man-(1-&gt;6)-alpha-D-Man-(1-&gt;4)-alpha-D-GlcN-(1-&gt;6)-(1-radyl,2-acyl-sn-glycero-3-phospho)-2-acyl-inositol (also termed H3) intermediate generating an alpha-D-Man-(1-&gt;2)-alpha-D-Man-(1-&gt;6)-alpha-D-Man-(1-&gt;4)-alpha-D-GlcN-(1-&gt;6)-(1-radyl,2-acyl-sn-glycero-3-phospho)-2-acyl-inositol (also termed H4). The sequence is that of GPI alpha-1,2-mannosyltransferase 3 from Mus musculus (Mouse).